The following is a 253-amino-acid chain: 1-(5-phosphoribosyl)-5-[(5-phosphoribosylamino)methylideneamino] imidazole-4-carboxamide isomerase (253 aa).

The active-site Proton acceptor is Asp-8. Asp-131 serves as the catalytic Proton donor.

It belongs to the HisA/HisF family.

The protein localises to the cytoplasm. The catalysed reaction is 1-(5-phospho-beta-D-ribosyl)-5-[(5-phospho-beta-D-ribosylamino)methylideneamino]imidazole-4-carboxamide = 5-[(5-phospho-1-deoxy-D-ribulos-1-ylimino)methylamino]-1-(5-phospho-beta-D-ribosyl)imidazole-4-carboxamide. The protein operates within amino-acid biosynthesis; L-histidine biosynthesis; L-histidine from 5-phospho-alpha-D-ribose 1-diphosphate: step 4/9. This chain is 1-(5-phosphoribosyl)-5-[(5-phosphoribosylamino)methylideneamino] imidazole-4-carboxamide isomerase, found in Polynucleobacter asymbioticus (strain DSM 18221 / CIP 109841 / QLW-P1DMWA-1) (Polynucleobacter necessarius subsp. asymbioticus).